Reading from the N-terminus, the 229-residue chain is Wtf element wtf14 (229 aa).

Residues 1-26 (MENNHHLAKDSLDELNPKRGKGEHET) are compositionally biased toward basic and acidic residues. A disordered region spans residues 1 to 27 (MENNHHLAKDSLDELNPKRGKGEHETQ). 4 helical membrane passes run 71–91 (IPAV…YLVF), 100–120 (VLFG…LLAT), 151–171 (LYAI…LMFF), and 188–208 (VIGV…PGLF).

This sequence belongs to the WTF family.

It localises to the endoplasmic reticulum membrane. Functionally, may act in meiotic drive. In Schizosaccharomyces kambucha (Fission yeast), this protein is Wtf element wtf14.